A 443-amino-acid polypeptide reads, in one-letter code: UDP-N-acetylmuramate--L-alanine ligase (443 aa).

Gly-110–Ser-116 contributes to the ATP binding site.

This sequence belongs to the MurCDEF family.

It localises to the cytoplasm. The catalysed reaction is UDP-N-acetyl-alpha-D-muramate + L-alanine + ATP = UDP-N-acetyl-alpha-D-muramoyl-L-alanine + ADP + phosphate + H(+). Its pathway is cell wall biogenesis; peptidoglycan biosynthesis. In terms of biological role, cell wall formation. The sequence is that of UDP-N-acetylmuramate--L-alanine ligase from Lactococcus lactis subsp. lactis (strain IL1403) (Streptococcus lactis).